A 187-amino-acid polypeptide reads, in one-letter code: Ribosome-recycling factor (187 aa).

This sequence belongs to the RRF family.

It localises to the cytoplasm. Functionally, responsible for the release of ribosomes from messenger RNA at the termination of protein biosynthesis. May increase the efficiency of translation by recycling ribosomes from one round of translation to another. The protein is Ribosome-recycling factor of Ruegeria pomeroyi (strain ATCC 700808 / DSM 15171 / DSS-3) (Silicibacter pomeroyi).